We begin with the raw amino-acid sequence, 795 residues long: Lon protease 1 (795 aa).

One can recognise a Lon N-terminal domain in the interval 9 to 204 (LPVLPLRNTV…RVLALLLRDL (196 aa)). Residue 360 to 367 (GPPGVGKT) participates in ATP binding. The region spanning 596-777 (EPQVGAAQGL…GEVLKLLLLP (182 aa)) is the Lon proteolytic domain. Active-site residues include Ser-683 and Lys-726.

It belongs to the peptidase S16 family. Homohexamer. Organized in a ring with a central cavity.

It localises to the cytoplasm. It carries out the reaction Hydrolysis of proteins in presence of ATP.. ATP-dependent serine protease that mediates the selective degradation of mutant and abnormal proteins as well as certain short-lived regulatory proteins. Required for cellular homeostasis and for survival from DNA damage and developmental changes induced by stress. Degrades polypeptides processively to yield small peptide fragments that are 5 to 10 amino acids long. Binds to DNA in a double-stranded, site-specific manner. This is Lon protease 1 from Thermus thermophilus (strain ATCC BAA-163 / DSM 7039 / HB27).